The following is a 368-amino-acid chain: tRNA 2-selenouridine synthase (368 aa).

The region spanning phenylalanine 15 to glutamate 138 is the Rhodanese domain. Cysteine 98 acts as the S-selanylcysteine intermediate in catalysis.

This sequence belongs to the SelU family. As to quaternary structure, monomer.

The enzyme catalyses 5-methylaminomethyl-2-thiouridine(34) in tRNA + selenophosphate + (2E)-geranyl diphosphate + H2O + H(+) = 5-methylaminomethyl-2-selenouridine(34) in tRNA + (2E)-thiogeraniol + phosphate + diphosphate. The catalysed reaction is 5-methylaminomethyl-2-thiouridine(34) in tRNA + (2E)-geranyl diphosphate = 5-methylaminomethyl-S-(2E)-geranyl-thiouridine(34) in tRNA + diphosphate. It carries out the reaction 5-methylaminomethyl-S-(2E)-geranyl-thiouridine(34) in tRNA + selenophosphate + H(+) = 5-methylaminomethyl-2-(Se-phospho)selenouridine(34) in tRNA + (2E)-thiogeraniol. It catalyses the reaction 5-methylaminomethyl-2-(Se-phospho)selenouridine(34) in tRNA + H2O = 5-methylaminomethyl-2-selenouridine(34) in tRNA + phosphate. Involved in the post-transcriptional modification of the uridine at the wobble position (U34) of tRNA(Lys), tRNA(Glu) and tRNA(Gln). Catalyzes the conversion of 2-thiouridine (S2U-RNA) to 2-selenouridine (Se2U-RNA). Acts in a two-step process involving geranylation of 2-thiouridine (S2U) to S-geranyl-2-thiouridine (geS2U) and subsequent selenation of the latter derivative to 2-selenouridine (Se2U) in the tRNA chain. In Shewanella baltica (strain OS155 / ATCC BAA-1091), this protein is tRNA 2-selenouridine synthase.